Here is a 120-residue protein sequence, read N- to C-terminus: Putative ankyrin repeat protein RBE_1215 (120 aa).

ANK repeat units lie at residues 22-52 (DGGN…LTNI) and 59-88 (FGDT…ITSV).

In Rickettsia bellii (strain RML369-C), this protein is Putative ankyrin repeat protein RBE_1215.